The primary structure comprises 248 residues: 3-oxoacyl-[acyl-carrier-protein] reductase FabG (248 aa).

NADP(+)-binding positions include 14–17 (GGSR), 65–66 (DV), and Asn92. Ser144 provides a ligand contact to substrate. The active-site Proton acceptor is Tyr157. NADP(+) contacts are provided by residues 157–161 (YAAAK) and Ile190.

Belongs to the short-chain dehydrogenases/reductases (SDR) family. Homotetramer.

The enzyme catalyses a (3R)-hydroxyacyl-[ACP] + NADP(+) = a 3-oxoacyl-[ACP] + NADPH + H(+). The protein operates within lipid metabolism; fatty acid biosynthesis. Functionally, catalyzes the NADPH-dependent reduction of beta-ketoacyl-ACP substrates to beta-hydroxyacyl-ACP products, the first reductive step in the elongation cycle of fatty acid biosynthesis. In Chlamydia muridarum (strain MoPn / Nigg), this protein is 3-oxoacyl-[acyl-carrier-protein] reductase FabG (fabG).